Consider the following 340-residue polypeptide: N-acetyl-gamma-glutamyl-phosphate reductase (340 aa).

The active site involves cysteine 146.

Belongs to the NAGSA dehydrogenase family. Type 1 subfamily.

The protein resides in the cytoplasm. The catalysed reaction is N-acetyl-L-glutamate 5-semialdehyde + phosphate + NADP(+) = N-acetyl-L-glutamyl 5-phosphate + NADPH + H(+). Its pathway is amino-acid biosynthesis; L-arginine biosynthesis; N(2)-acetyl-L-ornithine from L-glutamate: step 3/4. Its function is as follows. Catalyzes the NADPH-dependent reduction of N-acetyl-5-glutamyl phosphate to yield N-acetyl-L-glutamate 5-semialdehyde. The sequence is that of N-acetyl-gamma-glutamyl-phosphate reductase from Streptococcus sanguinis (strain SK36).